Here is a 166-residue protein sequence, read N- to C-terminus: Cold-inducible RNA-binding protein B (166 aa).

The region spanning 5-83 (GKLFIGGLNF…RQIRVDQAGK (79 aa)) is the RRM domain. The tract at residues 68–166 (GKAVDGRQIR…DSYDSYATHE (99 aa)) is disordered. Gly residues predominate over residues 92–115 (YRGGSSGGRGFFRGGRGRGGGDRG). The segment covering 133–149 (GSRDYYSSGRSQGSYGD) has biased composition (low complexity). Over residues 157-166 (DSYDSYATHE) the composition is skewed to basic and acidic residues.

As to quaternary structure, interacts with prmt1. Interacts with elavl1/elrA (via RRM3). Associates with ribosomes. Post-translationally, methylated on arginine residues within RGG motifs. Methylation by prmt1 promotes cytoplasmic accumulation. In adults, most abundant in testis, ovary, brain and liver, with lower expression in kidney and heart.

It is found in the nucleus. Its subcellular location is the nucleoplasm. The protein localises to the cytoplasm. Cold-inducible mRNA binding protein. Acts cooperatively with elavl1/elrA to stabilize AU-rich element (ARE)-containing mRNAs by binding to them and inhibiting their deadenylation. Essential for embryonic gastrulation and neural development, acting to maintain the expression of a set of adhesion molecules, and cell movement during embryogenesis. Required for pronephros development. The chain is Cold-inducible RNA-binding protein B (cirbp-b) from Xenopus laevis (African clawed frog).